We begin with the raw amino-acid sequence, 295 residues long: UDP-N-acetylenolpyruvoylglucosamine reductase (295 aa).

The FAD-binding PCMH-type domain maps to 24–188 (KVGGNAEIFF…LKAVFKVNKG (165 aa)). Arg168 is an active-site residue. Catalysis depends on Ser217, which acts as the Proton donor. Residue Glu287 is part of the active site.

This sequence belongs to the MurB family. FAD is required as a cofactor.

Its subcellular location is the cytoplasm. It catalyses the reaction UDP-N-acetyl-alpha-D-muramate + NADP(+) = UDP-N-acetyl-3-O-(1-carboxyvinyl)-alpha-D-glucosamine + NADPH + H(+). It functions in the pathway cell wall biogenesis; peptidoglycan biosynthesis. In terms of biological role, cell wall formation. This is UDP-N-acetylenolpyruvoylglucosamine reductase from Rickettsia felis (strain ATCC VR-1525 / URRWXCal2) (Rickettsia azadi).